We begin with the raw amino-acid sequence, 200 residues long: Protein GrpE (200 aa).

Positions 1–11 (MTDNDGQKDFS) are enriched in basic and acidic residues. Residues 1–43 (MTDNDGQKDFSEAAAENAGSKPGEPRVSKPYIMPDDPEETPSE) are disordered.

This sequence belongs to the GrpE family. Homodimer.

Its subcellular location is the cytoplasm. Its function is as follows. Participates actively in the response to hyperosmotic and heat shock by preventing the aggregation of stress-denatured proteins, in association with DnaK and GrpE. It is the nucleotide exchange factor for DnaK and may function as a thermosensor. Unfolded proteins bind initially to DnaJ; upon interaction with the DnaJ-bound protein, DnaK hydrolyzes its bound ATP, resulting in the formation of a stable complex. GrpE releases ADP from DnaK; ATP binding to DnaK triggers the release of the substrate protein, thus completing the reaction cycle. Several rounds of ATP-dependent interactions between DnaJ, DnaK and GrpE are required for fully efficient folding. In Afipia carboxidovorans (strain ATCC 49405 / DSM 1227 / KCTC 32145 / OM5) (Oligotropha carboxidovorans), this protein is Protein GrpE.